Reading from the N-terminus, the 352-residue chain is 4-hydroxy-3-methylbut-2-en-1-yl diphosphate synthase (flavodoxin) (352 aa).

[4Fe-4S] cluster-binding residues include C262, C265, C297, and E304.

Belongs to the IspG family. [4Fe-4S] cluster is required as a cofactor.

The enzyme catalyses (2E)-4-hydroxy-3-methylbut-2-enyl diphosphate + oxidized [flavodoxin] + H2O + 2 H(+) = 2-C-methyl-D-erythritol 2,4-cyclic diphosphate + reduced [flavodoxin]. The protein operates within isoprenoid biosynthesis; isopentenyl diphosphate biosynthesis via DXP pathway; isopentenyl diphosphate from 1-deoxy-D-xylulose 5-phosphate: step 5/6. Functionally, converts 2C-methyl-D-erythritol 2,4-cyclodiphosphate (ME-2,4cPP) into 1-hydroxy-2-methyl-2-(E)-butenyl 4-diphosphate. The chain is 4-hydroxy-3-methylbut-2-en-1-yl diphosphate synthase (flavodoxin) from Campylobacter curvus (strain 525.92).